A 103-amino-acid chain; its full sequence is Floral defensin-like protein 1 (103 aa).

Residues 1–25 form the signal peptide; sequence MARSICFFAVAILALMLFAAYDAEA. 5 cysteine pairs are disulfide-bonded: Cys-28–Cys-72, Cys-32–Cys-48, Cys-39–Cys-59, Cys-45–Cys-66, and Cys-49–Cys-68. Residues 73–103 constitute a propeptide, removed in mature form; it reads VFEKTEATQTETFTKDVNTLAEALLEADMMV.

This sequence belongs to the DEFL family. Post-translationally, when compared to other plant defensins, the petunia defensins have an additional fifth disulfide bond. In terms of tissue distribution, petals.

It localises to the secreted. The protein localises to the vacuole. Its function is as follows. Plant defense peptide with antifungal activity against F.oxysporum and B.cinerea. The polypeptide is Floral defensin-like protein 1 (D1) (Petunia hybrida (Petunia)).